Consider the following 156-residue polypeptide: Ribosomal RNA large subunit methyltransferase H (156 aa).

Residues Leu-72 and Gly-104 each coordinate S-adenosyl-L-methionine.

It belongs to the RNA methyltransferase RlmH family. As to quaternary structure, homodimer.

It localises to the cytoplasm. It catalyses the reaction pseudouridine(1915) in 23S rRNA + S-adenosyl-L-methionine = N(3)-methylpseudouridine(1915) in 23S rRNA + S-adenosyl-L-homocysteine + H(+). Functionally, specifically methylates the pseudouridine at position 1915 (m3Psi1915) in 23S rRNA. This Maricaulis maris (strain MCS10) (Caulobacter maris) protein is Ribosomal RNA large subunit methyltransferase H.